The sequence spans 371 residues: Cytoplasmic dynein intermediate light chain DYN3 (371 aa).

Belongs to the dynein light intermediate chain DYN3 family. As to quaternary structure, the cytoplasmic dynein is composed of at least two heavy chains and a number of intermediate and light chains.

The protein localises to the cytoplasm. Its subcellular location is the cytoskeleton. Functionally, component of the cytoplasmic dynein which acts as a motor for the intracellular retrograde motility of vesicles and organelles along microtubules. May play an important role in the proper orientation of the mitotic spindle into the budding daughter cell yeast. Probably required for normal progression of the cell cycle. In Eremothecium gossypii (strain ATCC 10895 / CBS 109.51 / FGSC 9923 / NRRL Y-1056) (Yeast), this protein is Cytoplasmic dynein intermediate light chain DYN3 (DYN3).